Here is a 649-residue protein sequence, read N- to C-terminus: Exoribonuclease 2 (649 aa).

The RNB domain maps to 190-517 (RKDLTDLDFI…NHRLLKSIIK (328 aa)). Positions 562 to 644 (NQKFNAEITD…KTRSIIAKPV (83 aa)) constitute an S1 motif domain.

This sequence belongs to the RNR ribonuclease family. RNase II subfamily.

It is found in the cytoplasm. The catalysed reaction is Exonucleolytic cleavage in the 3'- to 5'-direction to yield nucleoside 5'-phosphates.. Functionally, involved in mRNA degradation. Hydrolyzes single-stranded polyribonucleotides processively in the 3' to 5' direction. This chain is Exoribonuclease 2, found in Buchnera aphidicola subsp. Acyrthosiphon pisum (strain 5A).